Reading from the N-terminus, the 1264-residue chain is MVLYKRKPILLPDPKPLPLDLNVQVWHIEETGEWFSSYEEFLERFDFYTRHHFTCEITGTSCLTFFQALDSEETQFKYVEDRFPLKLREPVARFLHFNGIRRLDALVEKVYARFKNDFFPGEVVYLRKQKDSSTTSSNSQQSTPQPDDMVEINSVGNPGLPQYQYQRRYVIKEKVQFNATINPESREIVMPAHTKYMLIEEAASSNKSFIVDQGQIYRDRSTFTKHLIKCFFKITLQRASSKMGAPWCVKPEYLAMYGLTMEWPKDMLKYKEDEPVVARRSNSANVSSPESEKNKRQSKSSGKSNTSNDASNKKETKKKRKPTEVNDSENNSSEEDKKKGQNVTSETHSKKRKKEANEEPNTENVESVPTPANAEPQAVTITSIMDDLALPYQHPPNIFPNLTYYNEKLECISLGSTKLSRPFDSFGKLLQAYQFLNTFGSKICLSHFSLDQFITSLKCTDPYELKGEVVLVNIRTQTSKEQEIENNGLPMKNKAETTTEEDSENPSDWQRNSFIRDMIMKRNSDKVEYKIVHDDPASDDILDNINHNGSALLIEVFTALLRLFINEEGDWSCIVVENWIIDDKGVLMERKDERGEGEAKQKRNAHGYFLQDKEKIDNLKDTLKENATEVQKESDAKNETNSESDSKSDSDSEERDPKLEKCLNYRNVNWIERLTKRQFNNSYWLIILLGVLEDCRHLPMYTEFIDSFIEKIIPKDISATQLPKQLWRNFCRKLSFSDKVNALWILVDLVSHFSPDIKAAVDDSMELCGQIRSERFKVARELKTEAAVLSNLQGDLQAIQEKLNKTDENTPSADGADKKDDSESNSEPIDLIIIEKKQKLIEEQDKKVQALQSDKNFLDNCLFENDLQRLKPLGLDRYGNRYFWLDHNGVPFPQYPAGMNETPKSNNSLSYHSGRLLIQGPKASSAKFFLNVSDEQLSNWQKIRNSEGISEATREVFGISKTSSGSYNYVENGIEVELLDSNDRVNPLIELTPIQKKIMDETPSRLLLSPDQWYCIDKLEDLSRIMDWLDNWGRKEHDLLRQIRPIMERIKSSLSLRDHALSLTAFTKNEEKLLKELENNEFTENELNVDSMDVDDKNSGVKSEVDVQVDAEEKREAVIDEKLEVIADELMKLDDSSKTRNVLNRIQELEDQRDELLEQKKSIINSQRPGARILARSERKRTKISRGNKVNKQIEILTDLVNYRHFKAMEDVIAWKNVLANSIWGSSLRKNASGNKRSGVIETVDDKLKDIVGQTSRTVTPAPN.

A WAC domain is found at 23–130 (VQVWHIEETG…GEVVYLRKQK (108 aa)). Disordered regions lie at residues 130–153 (KDSS…VEIN), 275–374 (PVVA…PANA), 482–508 (QEIE…NPSD), 627–655 (ATEV…SEER), and 803–825 (LNKT…SESN). Over residues 132-147 (SSTTSSNSQQSTPQPD) the composition is skewed to low complexity. Polar residues-rich tracts occupy residues 280 to 289 (RSNSANVSSP) and 299 to 310 (KSSGKSNTSNDA). The 61-residue stretch at 423–483 (FDSFGKLLQA…IRTQTSKEQE (61 aa)) folds into the DDT domain.

In terms of assembly, component of the ISW2 complex, which at least consists of ISW2, ITC1, DLS1 and DPB4. May form a stable subcomplex with ISW2.

Its subcellular location is the nucleus. Functions as a component of the ISW2 complex, which acts in remodeling the chromatin by catalyzing an ATP-dependent alteration in the structure of nucleosomal DNA. The ISW2 complex is involved in coordinating transcriptional repression and in inheritance of telomeric silencing. It is involved in repression of MAT a-specific genes, INO1, and early meiotic genes during mitotic growth dependent upon transcription factor UME6 and in a parallel pathway to the RPD3-SIN3 histone deacetylase complex. ITC1 is required for nucleosome-stimulated ATPase activity and chromatin-remodeling activity of the complex. Required for the repression of MATa a-specific genes. The sequence is that of Imitation switch two complex protein 1 (ITC1) from Saccharomyces cerevisiae (strain ATCC 204508 / S288c) (Baker's yeast).